Consider the following 739-residue polypeptide: Phosphoribosylformylglycinamidine synthase subunit PurL (739 aa).

Residue His-54 is part of the active site. ATP-binding residues include Tyr-57 and Lys-96. Glu-98 is a binding site for Mg(2+). Substrate-binding positions include Ser-99–His-102 and Arg-121. Catalysis depends on His-100, which acts as the Proton acceptor. Mg(2+) is bound at residue Asp-122. Substrate is bound at residue Gln-245. Asp-273 lines the Mg(2+) pocket. A substrate-binding site is contributed by Glu-317 to Gln-319. Positions 500 and 537 each coordinate ATP. Position 538 (Asn-538) interacts with Mg(2+). Position 540 (Ser-540) interacts with substrate.

Belongs to the FGAMS family. Monomer. Part of the FGAM synthase complex composed of 1 PurL, 1 PurQ and 2 PurS subunits.

Its subcellular location is the cytoplasm. It carries out the reaction N(2)-formyl-N(1)-(5-phospho-beta-D-ribosyl)glycinamide + L-glutamine + ATP + H2O = 2-formamido-N(1)-(5-O-phospho-beta-D-ribosyl)acetamidine + L-glutamate + ADP + phosphate + H(+). It participates in purine metabolism; IMP biosynthesis via de novo pathway; 5-amino-1-(5-phospho-D-ribosyl)imidazole from N(2)-formyl-N(1)-(5-phospho-D-ribosyl)glycinamide: step 1/2. Functionally, part of the phosphoribosylformylglycinamidine synthase complex involved in the purines biosynthetic pathway. Catalyzes the ATP-dependent conversion of formylglycinamide ribonucleotide (FGAR) and glutamine to yield formylglycinamidine ribonucleotide (FGAM) and glutamate. The FGAM synthase complex is composed of three subunits. PurQ produces an ammonia molecule by converting glutamine to glutamate. PurL transfers the ammonia molecule to FGAR to form FGAM in an ATP-dependent manner. PurS interacts with PurQ and PurL and is thought to assist in the transfer of the ammonia molecule from PurQ to PurL. In Bacillus cereus (strain ZK / E33L), this protein is Phosphoribosylformylglycinamidine synthase subunit PurL.